The chain runs to 158 residues: Transcriptional regulator MraZ (158 aa).

SpoVT-AbrB domains follow at residues Thr-7–Ala-57 and Ala-86–Ala-129. Positions Arg-133–Ala-158 are disordered.

The protein belongs to the MraZ family. As to quaternary structure, forms oligomers.

It is found in the cytoplasm. It localises to the nucleoid. This chain is Transcriptional regulator MraZ, found in Gluconacetobacter diazotrophicus (strain ATCC 49037 / DSM 5601 / CCUG 37298 / CIP 103539 / LMG 7603 / PAl5).